The chain runs to 468 residues: ATP synthase subunit beta (468 aa).

An ATP-binding site is contributed by 155–162; sequence GGAGVGKT.

This sequence belongs to the ATPase alpha/beta chains family. F-type ATPases have 2 components, CF(1) - the catalytic core - and CF(0) - the membrane proton channel. CF(1) has five subunits: alpha(3), beta(3), gamma(1), delta(1), epsilon(1). CF(0) has three main subunits: a(1), b(2) and c(9-12). The alpha and beta chains form an alternating ring which encloses part of the gamma chain. CF(1) is attached to CF(0) by a central stalk formed by the gamma and epsilon chains, while a peripheral stalk is formed by the delta and b chains.

It localises to the cell membrane. It carries out the reaction ATP + H2O + 4 H(+)(in) = ADP + phosphate + 5 H(+)(out). Functionally, produces ATP from ADP in the presence of a proton gradient across the membrane. The catalytic sites are hosted primarily by the beta subunits. This Streptococcus uberis (strain ATCC BAA-854 / 0140J) protein is ATP synthase subunit beta.